The sequence spans 156 residues: Small ribosomal subunit protein bS18c (156 aa).

A disordered region spans residues 1 to 54 (MYTSKQPFLKSKQPFRKSKQPFRKSKQPFRKFKKPFRKSKQPFRRRPRIGPGDR). The segment covering 13-48 (QPFRKSKQPFRKSKQPFRKFKKPFRKSKQPFRRRPR) has biased composition (basic residues).

The protein belongs to the bacterial ribosomal protein bS18 family. Part of the 30S ribosomal subunit.

Its subcellular location is the plastid. The protein localises to the chloroplast. The protein is Small ribosomal subunit protein bS18c of Lolium perenne (Perennial ryegrass).